Reading from the N-terminus, the 1045-residue chain is Protein phosphatase Slingshot (1045 aa).

Positions 1 to 20 (MALVTVQRSPSVAGSCSNSD) are enriched in polar residues. 4 disordered regions span residues 1 to 35 (MALV…GNDR), 58 to 80 (TQSE…SNNS), 143 to 194 (KVGG…DNKN), and 306 to 325 (ESRR…EKEE). Low complexity predominate over residues 66-80 (TDSTRSSNSTQSNNS). Positions 149 to 174 (GTKSSTSPAVPTQRQLSVEQTATEAS) are enriched in polar residues. Over residues 175-185 (SKCDKTADKEN) the composition is skewed to basic and acidic residues. One can recognise a DEK-C domain in the interval 324–379 (EETESVIKMKLKAIMMSVDLDEVTSKYIRGRLEEILDMDLGEYKSFIDAEMLVILG). One can recognise a Tyrosine-protein phosphatase domain in the interval 383–524 (APTKIFEHVY…LETYSGMLDA (142 aa)). Cysteine 468 acts as the Phosphocysteine intermediate in catalysis. Residues 529–547 (EKLQRSKSETNLKSTKDAR) are compositionally biased toward basic and acidic residues. Disordered regions lie at residues 529–631 (EKLQ…PERS), 699–799 (SHLG…GDNR), and 1001–1045 (ACSA…SDSS). Residues 560 to 569 (ALNQAKSKST) are compositionally biased toward polar residues. Positions 586 to 601 (MHRRSIAQKSQRRMVR) are enriched in basic residues. The segment covering 602-625 (RSSSTSPKTQTAVVTKQQSQSMEN) has biased composition (polar residues). Over residues 704 to 713 (SVSGSSSGNI) the composition is skewed to low complexity. The residue at position 719 (serine 719) is a Phosphoserine. A compositionally biased stretch (low complexity) spans 721-732 (CSDVFSSQVDSV). 2 stretches are compositionally biased toward polar residues: residues 764–774 (TPQQQKQQSNA) and 1008–1021 (KKTT…SSPV). Residues 1029-1045 (SAASNSNSSASNSSDSS) show a composition bias toward low complexity.

This sequence belongs to the protein-tyrosine phosphatase family. Interacts with actin.

It is found in the cytoplasm. The protein resides in the cytoskeleton. It catalyses the reaction O-phospho-L-tyrosyl-[protein] + H2O = L-tyrosyl-[protein] + phosphate. It carries out the reaction O-phospho-L-seryl-[protein] + H2O = L-seryl-[protein] + phosphate. The enzyme catalyses O-phospho-L-threonyl-[protein] + H2O = L-threonyl-[protein] + phosphate. Functionally, protein phosphatase which regulates actin filament dynamics. Dephosphorylates and activates the actin binding/depolymerizing factor tsr/cofilin, which subsequently binds to actin filaments and stimulates their disassembly. Required for axon growth. This is Protein phosphatase Slingshot (ssh) from Drosophila melanogaster (Fruit fly).